We begin with the raw amino-acid sequence, 336 residues long: Phenylalanine--tRNA ligase alpha subunit (336 aa).

Residue glutamate 251 participates in Mg(2+) binding.

The protein belongs to the class-II aminoacyl-tRNA synthetase family. Phe-tRNA synthetase alpha subunit type 1 subfamily. Tetramer of two alpha and two beta subunits. Requires Mg(2+) as cofactor.

The protein resides in the cytoplasm. The catalysed reaction is tRNA(Phe) + L-phenylalanine + ATP = L-phenylalanyl-tRNA(Phe) + AMP + diphosphate + H(+). The chain is Phenylalanine--tRNA ligase alpha subunit from Syntrophobacter fumaroxidans (strain DSM 10017 / MPOB).